A 517-amino-acid chain; its full sequence is MAKAIMLQGTSSNVGKSVLAAALCRIFHRNGYRVSPFKSQNMALNSGATPDGGEMGRAQIVQAMAAGVVPRVEMNPILLKPTAHASSQVIVLGRPVGNLGAREYHGHFNQKLWSRVEEAYAFLEREFEIIVIEGAGSPAEINLKAGEIANMRVARMAGAPVLLVADIDRGGALAAVVGTLELLEPEERVMVAGIIINKFRGDLDLLKPALDFLESRTGKPVLGVIPFLPDHGLPEEDSVVLEGVTGRSTGAGEVEIAVIKLPCISNFTDFDALEREKGVNLRYVEAASDLGNPDLVILPGSKNTIGDLLWLRCQGLETAIKELAGRGTPIIGICGGYQMLGKEIRDPEHVETDVEMIKGLDLLPIKTVFQTSKATNQVRGVVTGSGPFLGPLQGQEVQGYEIHMGASFLLDGRPAFKITSRGGRLVTLDDGALAGEGRIWGTYIHGILDNDSLRHQVISVLRARRGLPARPGMLNFMAEQERRLDILAGEVARHLDLGRLAAIMGLERPLVWTGHDN.

Residues 253–453 (EVEIAVIKLP…IHGILDNDSL (201 aa)) enclose the GATase cobBQ-type domain. Cysteine 334 functions as the Nucleophile in the catalytic mechanism. Histidine 445 is an active-site residue.

It belongs to the CobB/CobQ family. CobQ subfamily.

Its pathway is cofactor biosynthesis; adenosylcobalamin biosynthesis. Functionally, catalyzes amidations at positions B, D, E, and G on adenosylcobyrinic A,C-diamide. NH(2) groups are provided by glutamine, and one molecule of ATP is hydrogenolyzed for each amidation. In Moorella thermoacetica (strain ATCC 39073 / JCM 9320), this protein is Cobyric acid synthase.